The following is a 516-amino-acid chain: MSERQPIRRALVSVYDKSGLDQLAKALIDAQVEVVSTGSTAKELASHGVTVTEVSEITGFPECLDGRVKTLHPKVHAGILADRRLTSHREQLTALEVKPFDLVVCNLYPFAETVAQGGDFDECIEKIDIGGPSMVRAAAKNHANVAVLTNPDQYEDLARALSEGGYTMEERRVLAARAFAHTAAYDVAVATWFGSRDGVAVDGVPTFVGTTGELSHPLRYGENSHQAAAVYRSSGEPGLAGARQLHGKAMSYNNYVDTNSARRAAFDFEAPCVAVIKHSNPCGIATGSDIAEAHRKAHACDSLSAFGGVIATNRPVSVEMAEQVAEIFTEVVVAPGYEDGAVEILSRKKNIRLLECPAPHLAGWELRQIDGGLLAMETDLFQADGDDPANWTLAAGDPVDDVTLADLSFAWRACRSVRSNAILLAHDGASVGVGMGQVNRVDSCRLAVERAGDRAAGSVAASDAFFPFADGPQVLIDAHIAAIVEPGGSIRDDQTIEVCRTAGVPLYFTGTRHFFH.

One can recognise an MGS-like domain in the interval 1–149 (MSERQPIRRA…KNHANVAVLT (149 aa)).

The protein belongs to the PurH family.

The catalysed reaction is (6R)-10-formyltetrahydrofolate + 5-amino-1-(5-phospho-beta-D-ribosyl)imidazole-4-carboxamide = 5-formamido-1-(5-phospho-D-ribosyl)imidazole-4-carboxamide + (6S)-5,6,7,8-tetrahydrofolate. The enzyme catalyses IMP + H2O = 5-formamido-1-(5-phospho-D-ribosyl)imidazole-4-carboxamide. It participates in purine metabolism; IMP biosynthesis via de novo pathway; 5-formamido-1-(5-phospho-D-ribosyl)imidazole-4-carboxamide from 5-amino-1-(5-phospho-D-ribosyl)imidazole-4-carboxamide (10-formyl THF route): step 1/1. The protein operates within purine metabolism; IMP biosynthesis via de novo pathway; IMP from 5-formamido-1-(5-phospho-D-ribosyl)imidazole-4-carboxamide: step 1/1. The chain is Bifunctional purine biosynthesis protein PurH from Cutibacterium acnes (strain DSM 16379 / KPA171202) (Propionibacterium acnes).